A 189-amino-acid chain; its full sequence is Threonylcarbamoyl-AMP synthase (189 aa).

Positions Ser-6 to Gly-189 constitute a YrdC-like domain.

Belongs to the SUA5 family. TsaC subfamily.

It is found in the cytoplasm. It catalyses the reaction L-threonine + hydrogencarbonate + ATP = L-threonylcarbamoyladenylate + diphosphate + H2O. Its function is as follows. Required for the formation of a threonylcarbamoyl group on adenosine at position 37 (t(6)A37) in tRNAs that read codons beginning with adenine. Catalyzes the conversion of L-threonine, HCO(3)(-)/CO(2) and ATP to give threonylcarbamoyl-AMP (TC-AMP) as the acyladenylate intermediate, with the release of diphosphate. This chain is Threonylcarbamoyl-AMP synthase, found in Photorhabdus laumondii subsp. laumondii (strain DSM 15139 / CIP 105565 / TT01) (Photorhabdus luminescens subsp. laumondii).